The chain runs to 298 residues: Ethylmalonyl-CoA decarboxylase (298 aa).

It belongs to the enoyl-CoA hydratase/isomerase family.

It localises to the cytoplasm. It is found in the cytosol. The enzyme catalyses (2S)-ethylmalonyl-CoA + H(+) = butanoyl-CoA + CO2. It carries out the reaction (S)-methylmalonyl-CoA + H(+) = propanoyl-CoA + CO2. The catalysed reaction is (2R)-ethylmalonyl-CoA + H(+) = butanoyl-CoA + CO2. Its function is as follows. Decarboxylates ethylmalonyl-CoA, a potentially toxic metabolite, to form butyryl-CoA, suggesting it might be involved in metabolite proofreading. Acts preferentially on (S)-ethylmalonyl-CoA but also has some activity on the (R)-isomer. Also has methylmalonyl-CoA decarboxylase activity at lower level. This is Ethylmalonyl-CoA decarboxylase (ECHDC1) from Gallus gallus (Chicken).